The chain runs to 295 residues: Pyridoxal 5'-phosphate synthase subunit PdxS (295 aa).

A D-ribose 5-phosphate-binding site is contributed by aspartate 25. The active-site Schiff-base intermediate with D-ribose 5-phosphate is the lysine 82. Glycine 154 contacts D-ribose 5-phosphate. Arginine 166 provides a ligand contact to D-glyceraldehyde 3-phosphate. D-ribose 5-phosphate is bound by residues glycine 215 and 236-237 (GS).

Belongs to the PdxS/SNZ family. In terms of assembly, in the presence of PdxT, forms a dodecamer of heterodimers.

The catalysed reaction is aldehydo-D-ribose 5-phosphate + D-glyceraldehyde 3-phosphate + L-glutamine = pyridoxal 5'-phosphate + L-glutamate + phosphate + 3 H2O + H(+). It functions in the pathway cofactor biosynthesis; pyridoxal 5'-phosphate biosynthesis. In terms of biological role, catalyzes the formation of pyridoxal 5'-phosphate from ribose 5-phosphate (RBP), glyceraldehyde 3-phosphate (G3P) and ammonia. The ammonia is provided by the PdxT subunit. Can also use ribulose 5-phosphate and dihydroxyacetone phosphate as substrates, resulting from enzyme-catalyzed isomerization of RBP and G3P, respectively. In Actinobacillus pleuropneumoniae serotype 7 (strain AP76), this protein is Pyridoxal 5'-phosphate synthase subunit PdxS.